We begin with the raw amino-acid sequence, 89 residues long: Small ribosomal subunit protein uS19 (89 aa).

The protein belongs to the universal ribosomal protein uS19 family.

Protein S19 forms a complex with S13 that binds strongly to the 16S ribosomal RNA. The chain is Small ribosomal subunit protein uS19 from Vesicomyosocius okutanii subsp. Calyptogena okutanii (strain HA).